Here is a 184-residue protein sequence, read N- to C-terminus: dCTP deaminase (184 aa).

DCTP is bound by residues 107 to 112, 131 to 133, Gln152, Tyr166, and Gln176; these read KSTYAR and TLE. Catalysis depends on Glu133, which acts as the Proton donor/acceptor.

This sequence belongs to the dCTP deaminase family. As to quaternary structure, homotrimer.

It catalyses the reaction dCTP + H2O + H(+) = dUTP + NH4(+). The protein operates within pyrimidine metabolism; dUMP biosynthesis; dUMP from dCTP (dUTP route): step 1/2. Its function is as follows. Catalyzes the deamination of dCTP to dUTP. This is dCTP deaminase from Gemmatimonas aurantiaca (strain DSM 14586 / JCM 11422 / NBRC 100505 / T-27).